The primary structure comprises 271 residues: Phosphatidate cytidylyltransferase (271 aa).

Helical transmembrane passes span 12-32, 53-73, 75-95, 111-131, 136-156, 174-194, 199-219, and 251-271; these read LLPI…ALFI, FGRV…YHLP, LAGA…VLVL, LGMG…LKQW, GLII…YFSG, WEGV…VGLY, LGAL…SIVG, and SLTA…WGAP.

This sequence belongs to the CDS family.

The protein localises to the cell inner membrane. It carries out the reaction a 1,2-diacyl-sn-glycero-3-phosphate + CTP + H(+) = a CDP-1,2-diacyl-sn-glycerol + diphosphate. It participates in phospholipid metabolism; CDP-diacylglycerol biosynthesis; CDP-diacylglycerol from sn-glycerol 3-phosphate: step 3/3. This chain is Phosphatidate cytidylyltransferase (cdsA), found in Pseudomonas aeruginosa (strain ATCC 15692 / DSM 22644 / CIP 104116 / JCM 14847 / LMG 12228 / 1C / PRS 101 / PAO1).